The chain runs to 263 residues: Granzyme K (263 aa).

A signal peptide spans 1–21 (MRFSSWALVSLVAGVYMSSEC). Positions 22–25 (FHTE) are cleaved as a propeptide — activation peptide. The Peptidase S1 domain occupies 26–258 (IIGGREVQPH…YQTWIKSKLA (233 aa)). Cysteines 51 and 67 form a disulfide. Residues His-66 and Asp-115 each act as charge relay system in the active site. Intrachain disulfides connect Cys-148/Cys-219, Cys-180/Cys-198, and Cys-209/Cys-233. Residue Ser-213 is the Charge relay system of the active site.

The protein belongs to the peptidase S1 family. Granzyme subfamily.

It localises to the cytoplasmic granule. This chain is Granzyme K (Gzmk), found in Mus musculus (Mouse).